The primary structure comprises 347 residues: Holliday junction branch migration complex subunit RuvB (347 aa).

Residues 1–186 (MKDENSINFL…FGITARFELY (186 aa)) form a large ATPase domain (RuvB-L) region. Residues L25, R26, G67, K70, T71, T72, 133-135 (EDY), R176, Y186, and R223 each bind ATP. T71 contributes to the Mg(2+) binding site. A small ATPAse domain (RuvB-S) region spans residues 187–257 (SEIELVEIIK…IVSIGLEMLR (71 aa)). A head domain (RuvB-H) region spans residues 260–347 (GEGLDEQDRN…DISENQRVSF (88 aa)). Residues R315 and R320 each coordinate DNA.

It belongs to the RuvB family. In terms of assembly, homohexamer. Forms an RuvA(8)-RuvB(12)-Holliday junction (HJ) complex. HJ DNA is sandwiched between 2 RuvA tetramers; dsDNA enters through RuvA and exits via RuvB. An RuvB hexamer assembles on each DNA strand where it exits the tetramer. Each RuvB hexamer is contacted by two RuvA subunits (via domain III) on 2 adjacent RuvB subunits; this complex drives branch migration. In the full resolvosome a probable DNA-RuvA(4)-RuvB(12)-RuvC(2) complex forms which resolves the HJ.

It is found in the cytoplasm. The enzyme catalyses ATP + H2O = ADP + phosphate + H(+). Its function is as follows. The RuvA-RuvB-RuvC complex processes Holliday junction (HJ) DNA during genetic recombination and DNA repair, while the RuvA-RuvB complex plays an important role in the rescue of blocked DNA replication forks via replication fork reversal (RFR). RuvA specifically binds to HJ cruciform DNA, conferring on it an open structure. The RuvB hexamer acts as an ATP-dependent pump, pulling dsDNA into and through the RuvAB complex. RuvB forms 2 homohexamers on either side of HJ DNA bound by 1 or 2 RuvA tetramers; 4 subunits per hexamer contact DNA at a time. Coordinated motions by a converter formed by DNA-disengaged RuvB subunits stimulates ATP hydrolysis and nucleotide exchange. Immobilization of the converter enables RuvB to convert the ATP-contained energy into a lever motion, pulling 2 nucleotides of DNA out of the RuvA tetramer per ATP hydrolyzed, thus driving DNA branch migration. The RuvB motors rotate together with the DNA substrate, which together with the progressing nucleotide cycle form the mechanistic basis for DNA recombination by continuous HJ branch migration. Branch migration allows RuvC to scan DNA until it finds its consensus sequence, where it cleaves and resolves cruciform DNA. This chain is Holliday junction branch migration complex subunit RuvB, found in Borrelia garinii subsp. bavariensis (strain ATCC BAA-2496 / DSM 23469 / PBi) (Borreliella bavariensis).